A 753-amino-acid polypeptide reads, in one-letter code: Polyribonucleotide nucleotidyltransferase (753 aa).

The Mg(2+) site is built by D488 and D494. In terms of domain architecture, KH spans 555–614 (PKLYTMKINPEKIRDVIGKGGSTIRALTEETGTQIDIGEDGTITIASSDAAKADEAKRRI). The S1 motif domain maps to 624 to 692 (GKIYEGPVTK…EKGRVKLSLK (69 aa)). The disordered stretch occupies residues 692 to 753 (KALTERPAGM…EGEQQQQQQQ (62 aa)). The segment covering 699–739 (AGMERSDRPAPAEREFRQPREPRQQREFREPREPREPRDGG) has biased composition (basic and acidic residues).

Belongs to the polyribonucleotide nucleotidyltransferase family. The cofactor is Mg(2+).

It is found in the cytoplasm. It catalyses the reaction RNA(n+1) + phosphate = RNA(n) + a ribonucleoside 5'-diphosphate. Functionally, involved in mRNA degradation. Catalyzes the phosphorolysis of single-stranded polyribonucleotides processively in the 3'- to 5'-direction. The chain is Polyribonucleotide nucleotidyltransferase from Delftia acidovorans (strain DSM 14801 / SPH-1).